The following is a 324-amino-acid chain: Cytochrome c biogenesis protein CcsA (324 aa).

8 helical membrane-spanning segments follow: residues F15–I35, G44–G64, L71–F91, L98–L118, M143–L163, V228–N248, W255–L275, and A289–L309.

This sequence belongs to the CcmF/CycK/Ccl1/NrfE/CcsA family. As to quaternary structure, may interact with Ccs1.

It is found in the plastid. The protein resides in the chloroplast thylakoid membrane. Functionally, required during biogenesis of c-type cytochromes (cytochrome c6 and cytochrome f) at the step of heme attachment. In Daucus carota (Wild carrot), this protein is Cytochrome c biogenesis protein CcsA.